Here is a 398-residue protein sequence, read N- to C-terminus: Cell cycle checkpoint control protein RAD9B (398 aa).

A compositionally biased stretch (polar residues) spans 272–281; sequence RTSSPQSLRL. The interval 272–359 is disordered; it reads RTSSPQSLRL…DMEEGQSPSP (88 aa). A compositionally biased stretch (low complexity) spans 324–336; sequence SSSAAETRRASAS. Serine 349 and serine 358 each carry phosphoserine.

Belongs to the rad9 family. As to quaternary structure, interacts with HUS1, HUS1B, RAD1, RAD9A and RAD17.

The sequence is that of Cell cycle checkpoint control protein RAD9B (Rad9b) from Rattus norvegicus (Rat).